A 484-amino-acid polypeptide reads, in one-letter code: Glutamate--tRNA ligase (484 aa).

A 'HIGH' region motif is present at residues 11 to 21 (PSPTGLLHIGN). The 'KMSKS' region motif lies at 255-259 (KLSKR). ATP is bound at residue Lys-258.

It belongs to the class-I aminoacyl-tRNA synthetase family. Glutamate--tRNA ligase type 1 subfamily. As to quaternary structure, monomer.

Its subcellular location is the cytoplasm. The catalysed reaction is tRNA(Glu) + L-glutamate + ATP = L-glutamyl-tRNA(Glu) + AMP + diphosphate. In terms of biological role, catalyzes the attachment of glutamate to tRNA(Glu) in a two-step reaction: glutamate is first activated by ATP to form Glu-AMP and then transferred to the acceptor end of tRNA(Glu). This is Glutamate--tRNA ligase from Streptococcus agalactiae serotype Ia (strain ATCC 27591 / A909 / CDC SS700).